Here is a 408-residue protein sequence, read N- to C-terminus: Multidrug resistance protein MdtG (408 aa).

Helical transmembrane passes span leucine 16–phenylalanine 36, isoleucine 58–alanine 78, leucine 92–isoleucine 112, alanine 115–valine 135, threonine 146–alanine 166, proline 173–isoleucine 193, leucine 224–leucine 244, valine 256–proline 276, isoleucine 290–threonine 310, phenylalanine 319–asparagine 339, and alanine 378–leucine 398.

It belongs to the major facilitator superfamily. DHA1 family. MdtG (TC 2.A.1.2.20) subfamily.

It localises to the cell inner membrane. In terms of biological role, confers resistance to fosfomycin and deoxycholate. The chain is Multidrug resistance protein MdtG from Escherichia coli O6:K15:H31 (strain 536 / UPEC).